Here is a 45-residue protein sequence, read N- to C-terminus: Large ribosomal subunit protein bL34 (45 aa).

A disordered region spans residues 1–27 (MTKRTLGGTSRKRKRVSGFRVRMRTHT). Positions 10 to 27 (SRKRKRVSGFRVRMRTHT) are enriched in basic residues.

Belongs to the bacterial ribosomal protein bL34 family.

The protein is Large ribosomal subunit protein bL34 of Prochlorococcus marinus (strain MIT 9211).